The sequence spans 1552 residues: ABC multidrug transporter lscH (1552 aa).

2 consecutive transmembrane segments (helical) span residues 32–52 and 68–88; these read ETIL…IPII and WFKK…VGLW. Asparagine 91 is a glycosylation site (N-linked (GlcNAc...) asparagine). The next 8 helical transmembrane spans lie at 100 to 120, 158 to 178, 280 to 300, 311 to 331, 413 to 433, 457 to 477, 500 to 520, and 528 to 548; these read STPS…LSTI, HSAI…MLLL, LFQI…IELA, NGYG…VSVG, AACV…VFLA, ALAS…FSVI, ILSI…FAGI, and LTIA…SPLA. The 280-residue stretch at 280–559 folds into the ABC transmembrane type-1 1 domain; the sequence is LFQIGFTYAQ…IVQALPQISG (280 aa). The disordered stretch occupies residues 573–655; the sequence is AEERHDPRST…PDANGDSRDA (83 aa). Residues 581 to 602 show a composition bias toward polar residues; the sequence is STTTGTSPESNNGSQQTLSDKQ. The N-linked (GlcNAc...) asparagine glycan is linked to asparagine 592. One can recognise an ABC transporter 1 domain in the interval 639–884; sequence GHLADTTPDA…AELGWADRDL (246 aa). 676-683 is a binding site for ATP; it reads GPVGCGKS. N-linked (GlcNAc...) asparagine glycosylation is found at asparagine 719 and asparagine 834. Residues 887 to 912 are compositionally biased toward basic and acidic residues; that stretch reads QQEKPGKDELNHEHGEYSESAPEKLR. The tract at residues 887 to 917 is disordered; sequence QQEKPGKDELNHEHGEYSESAPEKLRRSQTN. Helical transmembrane passes span 957–977 and 1005–1025; these read GWLT…CDSF and AVLG…LFII. Residues 963 to 1241 form the ABC transmembrane type-1 2 domain; that stretch reads IFVIAICVYA…ATITSWVTLE (279 aa). The N-linked (GlcNAc...) asparagine glycan is linked to asparagine 1028. Helical transmembrane passes span 1076–1096, 1100–1120, 1184–1204, and 1210–1230; these read AALG…LVCV, YMAA…HFYL, WITF…IVLT, and AIGP…SATM. The ABC transporter 2 domain maps to 1295–1538; the sequence is IELDNVTASY…PTSIFKELYL (244 aa). 2 N-linked (GlcNAc...) asparagine glycosylation sites follow: asparagine 1299 and asparagine 1313. 1328-1335 lines the ATP pocket; that stretch reads GRTGSGKS.

This sequence belongs to the ABC transporter superfamily. ABCC family. Conjugate transporter (TC 3.A.1.208) subfamily.

The protein localises to the cell membrane. ABC multidrug transporter; part of the gene cluster that mediates the biosynthesis of the lipopeptide antibiotics leucinostatins that show extensive biological activities, including antimalarial, antiviral, antibacterial, antifungal, and antitumor activities, as well as phytotoxic. May be involved in the efflux of leucinostatins. The sequence is that of ABC multidrug transporter lscH from Purpureocillium lilacinum (Paecilomyces lilacinus).